The primary structure comprises 389 residues: UDP-GlcNAc:betaGal beta-1,3-N-acetylglucosaminyltransferase 8 (389 aa).

Residues 1-7 (MRCRKCQ) lie on the Cytoplasmic side of the membrane. A helical; Signal-anchor for type II membrane protein membrane pass occupies residues 8–24 (LCLSALLTLLGLKVYIE). At 25–389 (WTSESWLKKA…RHLWVPELQC (365 aa)) the chain is on the lumenal side. The tract at residues 36–57 (PRGALPSPTPPNAEPTLPTNLS) is disordered. Asn55 and Asn212 each carry an N-linked (GlcNAc...) asparagine glycan.

Belongs to the glycosyltransferase 31 family. In terms of assembly, interacts with B3GNT2; this interaction greatly increases B3GNT2 catalytic activity, independently of B3GNT8 enzymatic activity.

It localises to the golgi apparatus membrane. It participates in protein modification; protein glycosylation. Beta-1,3-N-acetylglucosaminyltransferase that plays a role in the elongation of specific branch structures of multiantennary N-glycans. Has strong activity towards tetraantennary N-glycans and 2,6 triantennary glycans. The chain is UDP-GlcNAc:betaGal beta-1,3-N-acetylglucosaminyltransferase 8 from Mus musculus (Mouse).